The sequence spans 105 residues: ATP synthase subunit c (105 aa).

A run of 2 helical transmembrane segments spans residues 37-57 (IGAG…GYIF) and 82-102 (SAIS…LIFV).

Belongs to the ATPase C chain family. F-type ATPases have 2 components, F(1) - the catalytic core - and F(0) - the membrane proton channel. F(1) has five subunits: alpha(3), beta(3), gamma(1), delta(1), epsilon(1). F(0) has three main subunits: a(1), b(2) and c(10-14). The alpha and beta chains form an alternating ring which encloses part of the gamma chain. F(1) is attached to F(0) by a central stalk formed by the gamma and epsilon chains, while a peripheral stalk is formed by the delta and b chains.

It is found in the cell membrane. Its function is as follows. F(1)F(0) ATP synthase produces ATP from ADP in the presence of a proton or sodium gradient. F-type ATPases consist of two structural domains, F(1) containing the extramembraneous catalytic core and F(0) containing the membrane proton channel, linked together by a central stalk and a peripheral stalk. During catalysis, ATP synthesis in the catalytic domain of F(1) is coupled via a rotary mechanism of the central stalk subunits to proton translocation. In terms of biological role, key component of the F(0) channel; it plays a direct role in translocation across the membrane. A homomeric c-ring of between 10-14 subunits forms the central stalk rotor element with the F(1) delta and epsilon subunits. In Mycoplasma pneumoniae (strain ATCC 29342 / M129 / Subtype 1) (Mycoplasmoides pneumoniae), this protein is ATP synthase subunit c.